The primary structure comprises 116 residues: Large ribosomal subunit protein bL19 (116 aa).

It belongs to the bacterial ribosomal protein bL19 family.

This protein is located at the 30S-50S ribosomal subunit interface and may play a role in the structure and function of the aminoacyl-tRNA binding site. The protein is Large ribosomal subunit protein bL19 of Mannheimia succiniciproducens (strain KCTC 0769BP / MBEL55E).